Consider the following 99-residue polypeptide: DNA-binding protein Fis (99 aa).

The segment at residues 75–94 (QTRAANMLGINRGTLRKKLK) is a DNA-binding region (H-T-H motif).

Belongs to the transcriptional regulatory Fis family. As to quaternary structure, homodimer.

Functionally, activates ribosomal RNA transcription. Plays a direct role in upstream activation of rRNA promoters. This is DNA-binding protein Fis from Haemophilus influenzae (strain PittEE).